Here is a 1416-residue protein sequence, read N- to C-terminus: DNA-directed RNA polymerase subunit beta' (1416 aa).

Zn(2+) is bound by residues cysteine 71, cysteine 73, cysteine 86, and cysteine 89. Mg(2+) is bound by residues aspartate 461, aspartate 463, and aspartate 465. Residues cysteine 815, cysteine 889, cysteine 896, and cysteine 899 each contribute to the Zn(2+) site.

The protein belongs to the RNA polymerase beta' chain family. As to quaternary structure, the RNAP catalytic core consists of 2 alpha, 1 beta, 1 beta' and 1 omega subunit. When a sigma factor is associated with the core the holoenzyme is formed, which can initiate transcription. Mg(2+) is required as a cofactor. The cofactor is Zn(2+).

The enzyme catalyses RNA(n) + a ribonucleoside 5'-triphosphate = RNA(n+1) + diphosphate. DNA-dependent RNA polymerase catalyzes the transcription of DNA into RNA using the four ribonucleoside triphosphates as substrates. In Haemophilus influenzae (strain PittEE), this protein is DNA-directed RNA polymerase subunit beta'.